A 418-amino-acid polypeptide reads, in one-letter code: Isocitrate dehydrogenase [NADP] (418 aa).

T106 is a binding site for NADP(+). Positions 115, 117, 121, 131, and 155 each coordinate D-threo-isocitrate. S115 carries the post-translational modification Phosphoserine. The residue at position 193 (T193) is a Phosphothreonine. D309 is a Mg(2+) binding site. Residues 341-347, N354, Y393, and R397 each bind NADP(+); that span reads HGTAPKY.

This sequence belongs to the isocitrate and isopropylmalate dehydrogenases family. In terms of assembly, homodimer. The cofactor is Mg(2+). Mn(2+) serves as cofactor.

It localises to the secreted. It catalyses the reaction D-threo-isocitrate + NADP(+) = 2-oxoglutarate + CO2 + NADPH. In terms of biological role, catalyzes the oxidative decarboxylation of isocitrate to 2-oxoglutarate and carbon dioxide with the concomitant reduction of NADP(+). This Pseudomonas aeruginosa (strain UCBPP-PA14) protein is Isocitrate dehydrogenase [NADP] (icd).